We begin with the raw amino-acid sequence, 869 residues long: Valine--tRNA ligase (869 aa).

The short motif at Pro47–Asn57 is the 'HIGH' region element. Residues Lys521–Ser525 carry the 'KMSKS' region motif. Residue Lys524 coordinates ATP.

It belongs to the class-I aminoacyl-tRNA synthetase family. ValS type 2 subfamily.

The protein resides in the cytoplasm. The enzyme catalyses tRNA(Val) + L-valine + ATP = L-valyl-tRNA(Val) + AMP + diphosphate. Catalyzes the attachment of valine to tRNA(Val). As ValRS can inadvertently accommodate and process structurally similar amino acids such as threonine, to avoid such errors, it has a 'posttransfer' editing activity that hydrolyzes mischarged Thr-tRNA(Val) in a tRNA-dependent manner. This Methanosarcina barkeri (strain Fusaro / DSM 804) protein is Valine--tRNA ligase.